Reading from the N-terminus, the 189-residue chain is Peptidyl-tRNA hydrolase (189 aa).

Tyr14 serves as a coordination point for tRNA. The Proton acceptor role is filled by His19. The tRNA site is built by Phe64, Asn66, and Asn112.

It belongs to the PTH family. Monomer.

It is found in the cytoplasm. The enzyme catalyses an N-acyl-L-alpha-aminoacyl-tRNA + H2O = an N-acyl-L-amino acid + a tRNA + H(+). Its function is as follows. Hydrolyzes ribosome-free peptidyl-tRNAs (with 1 or more amino acids incorporated), which drop off the ribosome during protein synthesis, or as a result of ribosome stalling. Functionally, catalyzes the release of premature peptidyl moieties from peptidyl-tRNA molecules trapped in stalled 50S ribosomal subunits, and thus maintains levels of free tRNAs and 50S ribosomes. This Zymomonas mobilis subsp. mobilis (strain ATCC 31821 / ZM4 / CP4) protein is Peptidyl-tRNA hydrolase.